The primary structure comprises 130 residues: Small ribosomal subunit protein uS9 (130 aa).

This sequence belongs to the universal ribosomal protein uS9 family.

The sequence is that of Small ribosomal subunit protein uS9 from Streptococcus mutans serotype c (strain ATCC 700610 / UA159).